We begin with the raw amino-acid sequence, 759 residues long: Subtilisin-like serine-protease S (759 aa).

The N-terminal stretch at 1–22 (MGSAKILSFTLLLFVGYTLVHG) is a signal peptide. In terms of domain architecture, Inhibitor I9 spans 28-105 (YIVYMGDRSH…SVFESKMNKL (78 aa)). In terms of domain architecture, Peptidase S8 spans 110–613 (SWDFLGLDTV…SGHVNPVASL (504 aa)). Aspartate 139 functions as the Charge relay system in the catalytic mechanism. An N-linked (GlcNAc...) asparagine glycan is attached at asparagine 170. The Charge relay system role is filled by histidine 215. N-linked (GlcNAc...) asparagine glycans are attached at residues asparagine 230 and asparagine 388. The region spanning 390-462 (SFCKEHTLDP…MIGQDAVEEL (73 aa)) is the PA domain. Serine 545 acts as the Charge relay system in catalysis. 3 N-linked (GlcNAc...) asparagine glycosylation sites follow: asparagine 593, asparagine 642, and asparagine 671.

This sequence belongs to the peptidase S8 family.

Its subcellular location is the secreted. It is found in the extracellular space. The protein resides in the apoplast. In terms of biological role, required for arbuscular mycorrhiza (AM) development during AM symbiosis with AM fungi (e.g. Glomeromycota intraradices). The chain is Subtilisin-like serine-protease S from Lotus japonicus (Lotus corniculatus var. japonicus).